The chain runs to 375 residues: Chaperone protein DnaJ 1 (375 aa).

The J domain occupies 4–68 (DYYAILGVER…EKRRIVDMGG (65 aa)). The segment at 127–209 (GTKKPITIDT…CGGDGRVRTQ (83 aa)) adopts a CR-type zinc-finger fold. Residues Cys-140, Cys-143, Cys-157, Cys-160, Cys-183, Cys-186, Cys-197, and Cys-200 each contribute to the Zn(2+) site. 4 CXXCXGXG motif repeats span residues 140 to 147 (CDRCEGTG), 157 to 164 (CSTCNGSG), 183 to 190 (CPTCRGTG), and 197 to 204 (CDKCGGDG).

This sequence belongs to the DnaJ family. Homodimer. Zn(2+) serves as cofactor.

Its subcellular location is the cytoplasm. Participates actively in the response to hyperosmotic and heat shock by preventing the aggregation of stress-denatured proteins and by disaggregating proteins, also in an autonomous, DnaK-independent fashion. Unfolded proteins bind initially to DnaJ; upon interaction with the DnaJ-bound protein, DnaK hydrolyzes its bound ATP, resulting in the formation of a stable complex. GrpE releases ADP from DnaK; ATP binding to DnaK triggers the release of the substrate protein, thus completing the reaction cycle. Several rounds of ATP-dependent interactions between DnaJ, DnaK and GrpE are required for fully efficient folding. Also involved, together with DnaK and GrpE, in the DNA replication of plasmids through activation of initiation proteins. The chain is Chaperone protein DnaJ 1 from Corynebacterium diphtheriae (strain ATCC 700971 / NCTC 13129 / Biotype gravis).